We begin with the raw amino-acid sequence, 1820 residues long: Afadin (1820 aa).

The 95-residue stretch at 39-133 (FHGVMRFYFQ…GRFVLKNEND (95 aa)) folds into the Ras-associating 1 domain. The segment at 129–196 (KNENDAIPAK…PSQGDDSENS (68 aa)) is disordered. The stretch at 146–186 (EKQEKEGVIQNFKRTLSKKEKKEKKKKEKEALRQASDKEER) forms a coiled coil. Over residues 160 to 172 (TLSKKEKKEKKKK) the composition is skewed to basic residues. A compositionally biased stretch (basic and acidic residues) spans 173-189 (EKEALRQASDKEERPSQ). Phosphoserine occurs at positions 216, 246, and 256. Residues 246 to 348 (SGGTLRIYAD…LVFQLKRRPP (103 aa)) enclose the Ras-associating 2 domain. The span at 356–371 (KKHVEGKSLKGKDRAD) shows a compositional bias: basic and acidic residues. The segment at 356-377 (KKHVEGKSLKGKDRADGSGYGS) is disordered. 2 positions are modified to phosphoserine: Ser391 and Ser424. Residues 426-492 (TEVGTEKFDD…LQSGMRLQFG (67 aa)) enclose the FHA domain. Ser512, Ser557, Ser562, Ser655, Ser1083, Ser1107, Ser1126, Ser1140, Ser1143, Ser1172, Ser1173, Ser1182, and Ser1199 each carry phosphoserine. The tract at residues 538–569 (GDVHSGTALPASRSTTRLDSDRVSSASSTAER) is disordered. The 256-residue stretch at 653–908 (DISPTERTHK…IENVVAVAEN (256 aa)) folds into the Dilute domain. A PDZ domain is found at 1007–1093 (IITVTLKKQN…VVTLEVAKQG (87 aa)). A disordered region spans residues 1107–1194 (SPMMQRISDR…GKGPYTSGTA (88 aa)). Residues 1113-1128 (ISDRRGSGKPRPKSEG) show a composition bias toward basic and acidic residues. Residues 1132 to 1143 (YNNSAQNGSPES) show a composition bias toward polar residues. Basic and acidic residues predominate over residues 1152–1172 (SEPKKLPGDDRLMKNRADHRS). A disordered region spans residues 1203 to 1222 (GNLCTEEQSPPPRPEAYPIP). Thr1232 carries the post-translational modification Phosphothreonine. Disordered stretches follow at residues 1235–1278 (ASKS…SQEE), 1308–1527 (QSSS…KQQQ), and 1567–1716 (RLQE…LKTQ). The residue at position 1238 (Ser1238) is a Phosphoserine. Residues 1252–1262 (YEEKPHVHTES) are compositionally biased toward basic and acidic residues. Ser1275 carries the phosphoserine modification. The span at 1309–1318 (SSSVESSTSS) shows a compositional bias: low complexity. A compositionally biased stretch (polar residues) spans 1325 to 1337 (SSKSVTPASTLTK). Residue Ser1328 is modified to Phosphoserine. Thr1330 carries the phosphothreonine modification. Positions 1364 to 1373 (LPPPPPPPPV) are enriched in pro residues. Residues 1407 to 1440 (EWKKREEHQRWYEKEKARLEEERERKRREQERKL) are compositionally biased toward basic and acidic residues. Residues 1410–1446 (KREEHQRWYEKEKARLEEERERKRREQERKLGQMRSQ) are a coiled coil. Positions 1443-1457 (MRSQTLNPASFSPLA) are enriched in polar residues. Over residues 1487-1503 (TIERKDLQYITISKEEL) the composition is skewed to basic and acidic residues. 2 positions are modified to phosphoserine: Ser1499 and Ser1510. A compositionally biased stretch (basic and acidic residues) spans 1513-1526 (PWKRDAREKLEKQQ). A coiled-coil region spans residues 1523 to 1561 (EKQQQMHIVDMLSKEIHELQNKVDRTAEESDRLRKLMLE). The span at 1576 to 1587 (EDDDEEEDDDVD) shows a compositional bias: acidic residues. The stretch at 1593–1665 (QRLEAERRAR…SRLEAERRRQ (73 aa)) forms a coiled coil. Residues 1595-1675 (LEAERRARMQ…HEEAARRLLE (81 aa)) are compositionally biased toward basic and acidic residues. Ser1694, Ser1719, Ser1770, and Ser1795 each carry phosphoserine. A disordered region spans residues 1734–1820 (EEEDYGPAGP…TELENELNTK (87 aa)). Over residues 1759–1772 (APREAREKLTRSQD) the composition is skewed to basic and acidic residues. Basic and acidic residues predominate over residues 1800–1820 (VSDKVKASRKLTELENELNTK). Lys1803 is subject to N6-acetyllysine.

Homodimer. Interacts with F-actin, nectin and NECTIN3. Essential for the association of nectin and E-cadherin. Isoform 2/s-afadin does not interact with F-actin. Interacts with ZO-1 and occludin, but probably in an indirect manner. Interacts with RIT1, RIT2, NRXN1 and BCR. Interacts with ADAM10; the interaction locks ADAM10 at adherens junctions following ADAM10 recruitment to adherens junctions by TSPAN33. Isoform 1 is expressed only in a restricted set of epithelial structures during early embryogenesis.

The protein localises to the cell junction. The protein resides in the adherens junction. In terms of biological role, belongs to an adhesion system, probably together with the E-cadherin-catenin system, which plays a role in the organization of homotypic, interneuronal and heterotypic cell-cell adherens junctions (AJs). Nectin- and actin-filament-binding protein that connects nectin to the actin cytoskeleton. May play a key role in the organization of epithelial structures of the embryonic ectoderm. Essential for the organization of adherens junctions. This chain is Afadin, found in Mus musculus (Mouse).